Reading from the N-terminus, the 108-residue chain is MVHTTVYGLAYLFYSGINCILLYQLEIESKFYIRYQLIMRVQKETTDAFTLQLASKEVITSSIYNTFNNTNEHMYLQPICNRIFLMTSIIDIASFKAQVLFLNIFMIK.

A run of 2 helical transmembrane segments spans residues 5–27 (TVYG…QLEI) and 83–105 (IFLM…LNIF).

It is found in the membrane. This is an uncharacterized protein from Schizosaccharomyces pombe (strain 972 / ATCC 24843) (Fission yeast).